The chain runs to 253 residues: Sulfoacetaldehyde reductase (253 aa).

Residue 6-30 participates in NADP(+) binding; the sequence is FITGATSGFGRAAAHRFAAAGWSLV. S139 lines the substrate pocket. Residue Y152 is the Proton acceptor of the active site.

The protein belongs to the short-chain dehydrogenases/reductases (SDR) family. Homodimer and heterotetramer.

It catalyses the reaction 2-hydroxyethane-1-sulfonate + NADP(+) = sulfoacetaldehyde + NADPH + H(+). Its pathway is organosulfur degradation. Its function is as follows. Catalyzes the formation of isethionate from 2-sulfoacetaldehyde in the deaminative pathway of taurine. The enzyme is specific for NADPH; NADH is not a substrate. Responsible for most of the activity observed in taurine-grown cells. The polypeptide is Sulfoacetaldehyde reductase (isfD) (Chromohalobacter salexigens (strain ATCC BAA-138 / DSM 3043 / CIP 106854 / NCIMB 13768 / 1H11)).